Here is a 382-residue protein sequence, read N- to C-terminus: UDP-N-acetylglucosamine--N-acetylmuramyl-(pentapeptide) pyrophosphoryl-undecaprenol N-acetylglucosamine transferase (382 aa).

Residues 22–24, asparagine 134, arginine 186, serine 212, 285–290, and glutamine 311 each bind UDP-N-acetyl-alpha-D-glucosamine; these read TGG and ALTVAE.

Belongs to the glycosyltransferase 28 family. MurG subfamily.

The protein resides in the cell inner membrane. The enzyme catalyses di-trans,octa-cis-undecaprenyl diphospho-N-acetyl-alpha-D-muramoyl-L-alanyl-D-glutamyl-meso-2,6-diaminopimeloyl-D-alanyl-D-alanine + UDP-N-acetyl-alpha-D-glucosamine = di-trans,octa-cis-undecaprenyl diphospho-[N-acetyl-alpha-D-glucosaminyl-(1-&gt;4)]-N-acetyl-alpha-D-muramoyl-L-alanyl-D-glutamyl-meso-2,6-diaminopimeloyl-D-alanyl-D-alanine + UDP + H(+). It functions in the pathway cell wall biogenesis; peptidoglycan biosynthesis. Its function is as follows. Cell wall formation. Catalyzes the transfer of a GlcNAc subunit on undecaprenyl-pyrophosphoryl-MurNAc-pentapeptide (lipid intermediate I) to form undecaprenyl-pyrophosphoryl-MurNAc-(pentapeptide)GlcNAc (lipid intermediate II). This is UDP-N-acetylglucosamine--N-acetylmuramyl-(pentapeptide) pyrophosphoryl-undecaprenol N-acetylglucosamine transferase from Pseudoalteromonas atlantica (strain T6c / ATCC BAA-1087).